We begin with the raw amino-acid sequence, 245 residues long: Methyltransferase-like protein 27 (245 aa).

This chain is Methyltransferase-like protein 27, found in Homo sapiens (Human).